The following is a 124-amino-acid chain: Large ribosomal subunit protein bL20c (124 aa).

This sequence belongs to the bacterial ribosomal protein bL20 family.

It is found in the plastid. It localises to the chloroplast. In terms of biological role, binds directly to 23S ribosomal RNA and is necessary for the in vitro assembly process of the 50S ribosomal subunit. It is not involved in the protein synthesizing functions of that subunit. The chain is Large ribosomal subunit protein bL20c (rpl20) from Euglena gracilis.